A 284-amino-acid polypeptide reads, in one-letter code: L-ribulose-5-phosphate 3-epimerase UlaE (284 aa).

Belongs to the L-ribulose-5-phosphate 3-epimerase family.

It catalyses the reaction L-ribulose 5-phosphate = L-xylulose 5-phosphate. The protein operates within cofactor degradation; L-ascorbate degradation; D-xylulose 5-phosphate from L-ascorbate: step 3/4. In terms of biological role, catalyzes the isomerization of L-xylulose-5-phosphate to L-ribulose-5-phosphate. Is involved in the anaerobic L-ascorbate utilization. This is L-ribulose-5-phosphate 3-epimerase UlaE from Escherichia coli (strain 55989 / EAEC).